The chain runs to 349 residues: Replication-associated protein (349 aa).

In terms of domain architecture, CRESS-DNA virus Rep endonuclease spans 9–117 (QIAAKNYFLT…DGDTIEWGEF (109 aa)). The RCR-1 motif lies at 16–19 (FLTY). 3 residues coordinate a divalent metal cation: Glu-50, His-58, and His-60. The RCR-2 signature appears at 58-60 (HLH). Residue Tyr-104 is the For DNA cleavage activity of the active site. The RCR-3 motif lies at 104–107 (YVDK). Residue Asp-108 coordinates a divalent metal cation. Residues 144–154 (KEEALQIIKEK) form a binding to RBR1 region. The interval 157–177 (KDFLFCYHNLVSNLDRIFTPA) is oligomerization. 223–230 (GESRTGKT) provides a ligand contact to ATP.

The protein belongs to the geminiviridae Rep protein family. In terms of assembly, homooligomer. Interacts with the replication enhancer protein (REn). Interacts with host retinoblastoma-related protein 1 (RBR1), and may thereby induce the transcription of host replicative enzymes even if the cell is not dividing anymore. Interacts with host PCNA. Interacts with host SCE1 protein. It depends on Mg(2+) as a cofactor. The cofactor is Mn(2+).

It localises to the host nucleus. Essential for the replication of viral ssDNA. The closed circular ssDNA genome is first converted to a superhelical dsDNA. Rep binds a specific region at the genome origin of replication. It introduces an endonucleolytic nick within the conserved sequence 5'-TAATATTAC-3' in the intergenic region of the genome present in all geminiviruses, thereby initiating the rolling circle replication (RCR). Following cleavage, binds covalently to the 5'-phosphate of DNA as a tyrosyl ester. The cleavage gives rise to a free 3'-OH that serves as a primer for the cellular DNA polymerase. The polymerase synthesizes the (+) strand DNA by rolling circle mechanism. After one round of replication, a Rep-catalyzed nucleotidyl transfer reaction releases a circular single-stranded virus genome, thereby terminating the replication. Displays origin-specific DNA cleavage, nucleotidyl transferase, ATPase and helicase activities. The protein is Replication-associated protein of Solanum lycopersicum (Tomato).